The sequence spans 191 residues: MGAYDGAEAPRAAPASTAANSRPSRLLLLHSLLLRLVAVVVSILVIAVMVHAKQRVMIFKAEWDNSKAFVALVAISAICLGYSFLQFILSAFHLCSKSWKSPTKCWAWMNFIADQILTYAMLGAAAAAAELAYIAKNGSSRAQWQPICSTFNTFCTRAGASIILSFIAVLALANSSAISAYHLFRRPSSSV.

Residues 1–25 (MGAYDGAEAPRAAPASTAANSRPSR) are Cytoplasmic-facing. The helical transmembrane segment at 26 to 46 (LLLLHSLLLRLVAVVVSILVI) threads the bilayer. Topologically, residues 47 to 68 (AVMVHAKQRVMIFKAEWDNSKA) are extracellular. A helical membrane pass occupies residues 69–89 (FVALVAISAICLGYSFLQFIL). Topologically, residues 90–114 (SAFHLCSKSWKSPTKCWAWMNFIAD) are cytoplasmic. The chain crosses the membrane as a helical span at residues 115-135 (QILTYAMLGAAAAAAELAYIA). Residues 136–157 (KNGSSRAQWQPICSTFNTFCTR) are Extracellular-facing. N137 carries an N-linked (GlcNAc...) asparagine glycan. Residues 158 to 178 (AGASIILSFIAVLALANSSAI) form a helical membrane-spanning segment. Residues 179–191 (SAYHLFRRPSSSV) lie on the Cytoplasmic side of the membrane.

Belongs to the Casparian strip membrane proteins (CASP) family. In terms of assembly, homodimer and heterodimers.

The protein localises to the cell membrane. This chain is CASP-like protein 2U3, found in Selaginella moellendorffii (Spikemoss).